We begin with the raw amino-acid sequence, 117 residues long: Large ribosomal subunit protein bL20 (117 aa).

The protein belongs to the bacterial ribosomal protein bL20 family.

Functionally, binds directly to 23S ribosomal RNA and is necessary for the in vitro assembly process of the 50S ribosomal subunit. It is not involved in the protein synthesizing functions of that subunit. The protein is Large ribosomal subunit protein bL20 of Leptospira interrogans serogroup Icterohaemorrhagiae serovar copenhageni (strain Fiocruz L1-130).